The chain runs to 219 residues: tRNA (guanine-N(7)-)-methyltransferase (219 aa).

4 residues coordinate S-adenosyl-L-methionine: Glu46, Glu71, Asn100, and Asp122. Residue Asp122 is part of the active site. Substrate is bound by residues Lys126, Asp158, and 199–202 (TEYE).

It belongs to the class I-like SAM-binding methyltransferase superfamily. TrmB family.

The catalysed reaction is guanosine(46) in tRNA + S-adenosyl-L-methionine = N(7)-methylguanosine(46) in tRNA + S-adenosyl-L-homocysteine. It participates in tRNA modification; N(7)-methylguanine-tRNA biosynthesis. In terms of biological role, catalyzes the formation of N(7)-methylguanine at position 46 (m7G46) in tRNA. This is tRNA (guanine-N(7)-)-methyltransferase from Leuconostoc mesenteroides subsp. mesenteroides (strain ATCC 8293 / DSM 20343 / BCRC 11652 / CCM 1803 / JCM 6124 / NCDO 523 / NBRC 100496 / NCIMB 8023 / NCTC 12954 / NRRL B-1118 / 37Y).